Here is a 439-residue protein sequence, read N- to C-terminus: Enolase (439 aa).

Substrate-binding residues include histidine 157 and glutamate 166. Glutamate 209 serves as the catalytic Proton donor. Residues aspartate 244, glutamate 297, and aspartate 324 each coordinate Mg(2+). Residues glutamate 297 and aspartate 324 each coordinate substrate. Residue lysine 349 is the Proton acceptor of the active site. Substrate contacts are provided by residues 376–379 and lysine 400; that span reads SHRS.

Belongs to the enolase family. As to quaternary structure, homodimer. The cofactor is Mg(2+).

The protein resides in the cytoplasm. The enzyme catalyses (2R)-2-phosphoglycerate = phosphoenolpyruvate + H2O. The protein operates within carbohydrate degradation; glycolysis; pyruvate from D-glyceraldehyde 3-phosphate: step 4/5. This Mastigamoeba balamuthi (Phreatamoeba balamuthi) protein is Enolase (ENOL).